A 469-amino-acid polypeptide reads, in one-letter code: ATP synthase subunit beta (469 aa).

155–162 (GGAGVGKT) is an ATP binding site.

It belongs to the ATPase alpha/beta chains family. As to quaternary structure, F-type ATPases have 2 components, CF(1) - the catalytic core - and CF(0) - the membrane proton channel. CF(1) has five subunits: alpha(3), beta(3), gamma(1), delta(1), epsilon(1). CF(0) has three main subunits: a(1), b(2) and c(9-12). The alpha and beta chains form an alternating ring which encloses part of the gamma chain. CF(1) is attached to CF(0) by a central stalk formed by the gamma and epsilon chains, while a peripheral stalk is formed by the delta and b chains.

It localises to the cell inner membrane. The enzyme catalyses ATP + H2O + 4 H(+)(in) = ADP + phosphate + 5 H(+)(out). Functionally, produces ATP from ADP in the presence of a proton gradient across the membrane. The catalytic sites are hosted primarily by the beta subunits. In Thermosipho melanesiensis (strain DSM 12029 / CIP 104789 / BI429), this protein is ATP synthase subunit beta.